The sequence spans 352 residues: UDP-N-acetylglucosamine--N-acetylmuramyl-(pentapeptide) pyrophosphoryl-undecaprenol N-acetylglucosamine transferase (352 aa).

Positions 195 and 287 each coordinate UDP-N-acetyl-alpha-D-glucosamine.

It belongs to the glycosyltransferase 28 family. MurG subfamily.

The protein resides in the cell membrane. It catalyses the reaction Mur2Ac(oyl-L-Ala-gamma-D-Glu-L-Lys-D-Ala-D-Ala)-di-trans,octa-cis-undecaprenyl diphosphate + UDP-N-acetyl-alpha-D-glucosamine = beta-D-GlcNAc-(1-&gt;4)-Mur2Ac(oyl-L-Ala-gamma-D-Glu-L-Lys-D-Ala-D-Ala)-di-trans,octa-cis-undecaprenyl diphosphate + UDP + H(+). Its pathway is cell wall biogenesis; peptidoglycan biosynthesis. Cell wall formation. Catalyzes the transfer of a GlcNAc subunit on undecaprenyl-pyrophosphoryl-MurNAc-pentapeptide (lipid intermediate I) to form undecaprenyl-pyrophosphoryl-MurNAc-(pentapeptide)GlcNAc (lipid intermediate II). This chain is UDP-N-acetylglucosamine--N-acetylmuramyl-(pentapeptide) pyrophosphoryl-undecaprenol N-acetylglucosamine transferase, found in Streptococcus pneumoniae (strain Taiwan19F-14).